Reading from the N-terminus, the 327-residue chain is Delta(6)-protoilludene synthase HYPSUDRAFT_138665 (327 aa).

Mg(2+)-binding residues include aspartate 79, asparagine 215, serine 219, and glutamate 223. The DDXXD motif signature appears at 79–83 (DEHTD). (2E,6E)-farnesyl diphosphate contacts are provided by arginine 304 and tyrosine 305.

The protein belongs to the terpene synthase family. The cofactor is Mg(2+).

It catalyses the reaction (2E,6E)-farnesyl diphosphate = Delta(6)-protoilludene + diphosphate. Terpene cyclase that catalyzes the cyclization of farnesyl diphosphate (FPP) to delta(6)-protoilludene. The protein is Delta(6)-protoilludene synthase HYPSUDRAFT_138665 of Hypholoma sublateritium (strain FD-334 SS-4).